The sequence spans 99 residues: Putative regulatory protein Kole_1849 (99 aa).

This sequence belongs to the RemA family.

The sequence is that of Putative regulatory protein Kole_1849 from Kosmotoga olearia (strain ATCC BAA-1733 / DSM 21960 / TBF 19.5.1).